The chain runs to 657 residues: Glycogen debranching enzyme (657 aa).

D336 serves as the catalytic Nucleophile. E371 acts as the Proton donor in catalysis. The segment at 460–479 is disordered; that stretch reads ANGEENRDGTNNNYSNNHGK.

It belongs to the glycosyl hydrolase 13 family.

It catalyses the reaction Hydrolysis of (1-&gt;6)-alpha-D-glucosidic linkages to branches with degrees of polymerization of three or four glucose residues in limit dextrin.. The protein operates within glycan degradation; glycogen degradation. In terms of biological role, removes maltotriose and maltotetraose chains that are attached by 1,6-alpha-linkage to the limit dextrin main chain, generating a debranched limit dextrin. The polypeptide is Glycogen debranching enzyme (Escherichia coli O6:K15:H31 (strain 536 / UPEC)).